The primary structure comprises 207 residues: Ras-related protein Rab-5B (207 aa).

The N-myristoyl glycine moiety is linked to residue glycine 2. GTP-binding positions include 41-49, 60-66, 90-94, 148-151, and 176-178; these read GDSGVGKSS, SEKHQVT, DTGGQ, NKKD, and SAK. Residues 63–71 carry the Effector region motif; the sequence is HQVTIGAAF.

Belongs to the small GTPase superfamily. Rab family. Interacts with CK1. May interact with ARF1. Myristoylation is required for cell membrane and food vacuole membrane localization. Post-translationally, may be palmitoylated on Cys-3. In terms of processing, lacks the C-terminal cysteine motifs subject to isoprenylation present in mammalian RAB5B homolog.

It localises to the cell membrane. The protein resides in the vacuole membrane. It is found in the vesicle. The enzyme catalyses GTP + H2O = GDP + phosphate + H(+). Alternates between an inactive GDP-bound form and an active GTP-bound form. Activated by guanine nucleotide-exchange factors (GEFs) and inactivated by GTPase-activating proteins (GAPs). Small GTPase which regulates vesicle trafficking between organelles. May be involved in the trafficking of the N-myristoylated AK2 from the endoplasmic reticulum to the parasitophorous vacuole membrane. The protein is Ras-related protein Rab-5B of Plasmodium falciparum (isolate 3D7).